Here is a 387-residue protein sequence, read N- to C-terminus: Leucine aminopeptidase 1 (387 aa).

An N-terminal signal peptide occupies residues methionine 1–alanine 18. A propeptide spanning residues alanine 19–valine 87 is cleaved from the precursor. Asparagine 179 carries an N-linked (GlcNAc...) asparagine glycan. Positions 187, 206, 245, and 272 each coordinate Zn(2+). Cysteine 321 and cysteine 325 are joined by a disulfide. Residue histidine 354 coordinates Zn(2+).

It belongs to the peptidase M28 family. M28E subfamily. As to quaternary structure, monomer. The cofactor is Zn(2+).

Its subcellular location is the secreted. Functionally, extracellular aminopeptidase that allows assimilation of proteinaceous substrates. The polypeptide is Leucine aminopeptidase 1 (lap1) (Aspergillus oryzae (strain ATCC 42149 / RIB 40) (Yellow koji mold)).